The sequence spans 208 residues: MGISRDNWHKRRKTGGKRKPYHKKRKYELGRPAANTKIGPRRIHTVGVRGGNKKYRALRLDVGNFSWGSECCTRKTRIIDVVYNASNNELVRTKTLVKNCIVLIDSTPYRQWYESHYALPLGRKKGAKLTPEEEEILNKKRSKKIQKKYDERKKNAKISSLLEEQFQQGKLLACIASRPGQCGRADGYVLEGKELEFYLRKIKARKGK.

The disordered stretch occupies residues 1-27 (MGISRDNWHKRRKTGGKRKPYHKKRKY). Glycine 2 carries N-myristoyl glycine lipidation. Basic residues predominate over residues 8–26 (WHKRRKTGGKRKPYHKKRK). N6-acetyllysine occurs at positions 37 and 128. Residue threonine 130 is modified to Phosphothreonine. Residue serine 160 is modified to Phosphoserine. Residues lysine 170 and lysine 193 each participate in a glycyl lysine isopeptide (Lys-Gly) (interchain with G-Cter in SUMO2) cross-link.

It belongs to the eukaryotic ribosomal protein eS8 family. In terms of assembly, component of the small ribosomal subunit. Identified in a IGF2BP1-dependent mRNP granule complex containing untranslated mRNAs. Part of the small subunit (SSU) processome, composed of more than 70 proteins and the RNA chaperone small nucleolar RNA (snoRNA) U3.

The protein localises to the cytoplasm. It localises to the membrane. Its subcellular location is the nucleus. It is found in the nucleolus. Component of the small ribosomal subunit. The ribosome is a large ribonucleoprotein complex responsible for the synthesis of proteins in the cell. Part of the small subunit (SSU) processome, first precursor of the small eukaryotic ribosomal subunit. During the assembly of the SSU processome in the nucleolus, many ribosome biogenesis factors, an RNA chaperone and ribosomal proteins associate with the nascent pre-rRNA and work in concert to generate RNA folding, modifications, rearrangements and cleavage as well as targeted degradation of pre-ribosomal RNA by the RNA exosome. The protein is Small ribosomal subunit protein eS8 (RPS8) of Oryctolagus cuniculus (Rabbit).